The sequence spans 200 residues: Neutrophil gelatinase-associated lipocalin (200 aa).

An N-terminal signal peptide occupies residues Met-1–Ala-20. Gln-21 carries the post-translational modification Pyrrolidone carboxylic acid. An a carboxymycobactin-binding site is contributed by Tyr-72–Thr-74. Asn-81 and Asn-85 each carry an N-linked (GlcNAc...) asparagine glycan. A disulfide bond links Cys-98 and Cys-197. An enterobactin-binding site is contributed by Tyr-128. A carboxymycobactin contacts are provided by Lys-147, Lys-156, and Tyr-160. Enterobactin is bound at residue Lys-156.

It belongs to the calycin superfamily. Lipocalin family. As to quaternary structure, monomer. Homodimer; disulfide-linked. Heterodimer; disulfide-linked with MMP9. N-glycosylated. Expressed in the cortical tubules of the kidney (at protein level). Also expressed in the medullary tubules of the kidney. Detected in lung, spleen, uterus, vagina and epididymis.

It is found in the secreted. Its subcellular location is the cytoplasmic granule lumen. The protein localises to the cytoplasmic vesicle lumen. In terms of biological role, iron-trafficking protein involved in multiple processes such as apoptosis, innate immunity and renal development. Binds iron through association with 2,3-dihydroxybenzoic acid (2,3-DHBA), a siderophore that shares structural similarities with bacterial enterobactin, and delivers or removes iron from the cell, depending on the context. Iron-bound form (holo-24p3) is internalized following binding to the SLC22A17 (24p3R) receptor, leading to release of iron and subsequent increase of intracellular iron concentration. In contrast, association of the iron-free form (apo-24p3) with the SLC22A17 (24p3R) receptor is followed by association with an intracellular siderophore, iron chelation and iron transfer to the extracellular medium, thereby reducing intracellular iron concentration. Involved in apoptosis due to interleukin-3 (IL3) deprivation: iron-loaded form increases intracellular iron concentration without promoting apoptosis, while iron-free form decreases intracellular iron levels, inducing expression of the proapoptotic protein BCL2L11/BIM, resulting in apoptosis. Involved in innate immunity; limits bacterial proliferation by sequestering iron bound to microbial siderophores, such as enterobactin. Can also bind siderophores from M.tuberculosis. The protein is Neutrophil gelatinase-associated lipocalin (Lcn2) of Mus musculus (Mouse).